Reading from the N-terminus, the 161-residue chain is Glycine cleavage system H protein 3 (161 aa).

A Lipoyl-binding domain is found at 40 to 122; the sequence is TVTLGLTDVG…YGDAWIVKIK (83 aa). At K81 the chain carries N6-lipoyllysine.

The protein belongs to the GcvH family. The glycine cleavage system is composed of four proteins: P, T, L and H. (R)-lipoate serves as cofactor.

In terms of biological role, the glycine cleavage system catalyzes the degradation of glycine. The H protein shuttles the methylamine group of glycine from the P protein to the T protein. This is Glycine cleavage system H protein 3 from Aquifex aeolicus (strain VF5).